The following is a 245-amino-acid chain: 8-amino-3,8-dideoxy-manno-octulosonate cytidylyltransferase (245 aa).

Belongs to the KdsB family.

The protein localises to the cytoplasm. The enzyme catalyses 8-amino-3,8-dideoxy-alpha-D-manno-octulosonate + CTP = CMP-8-amino-3,8-dideoxy-alpha-D-manno-oct-2-ulosonate + diphosphate. It participates in bacterial outer membrane biogenesis; lipopolysaccharide biosynthesis. Activates KDO8N (a required 8-carbon sugar) for incorporation into bacterial lipopolysaccharide in the Shewanella genus. The chain is 8-amino-3,8-dideoxy-manno-octulosonate cytidylyltransferase from Shewanella oneidensis (strain ATCC 700550 / JCM 31522 / CIP 106686 / LMG 19005 / NCIMB 14063 / MR-1).